A 212-amino-acid chain; its full sequence is External core antigen (212 aa).

Residues 1–19 (MQLFHLCLIISCSCPTVQA) form the signal peptide. The HBEAG stretch occupies residues 25-27 (GWL). Residues 172 to 212 (LPETTVVRRRGRSPRRRTPSPRRRRSQSPRRRRSQSRESQC) form a disordered region. The span at 178–205 (VRRRGRSPRRRTPSPRRRRSQSPRRRRS) shows a compositional bias: basic residues. Residues 184–190 (SPRRRTP) form a 1; half-length repeat. A 3 X 8 AA repeats of S-P-R-R-R-R-S-Q region spans residues 184–206 (SPRRRTPSPRRRRSQSPRRRRSQ). A propeptide spanning residues 184-212 (SPRRRTPSPRRRRSQSPRRRRSQSRESQC) is cleaved from the precursor. 2 repeat units span residues 191 to 198 (SPRRRRSQ) and 199 to 206 (SPRRRRSQ).

The protein belongs to the orthohepadnavirus precore antigen family. Homodimerizes. In terms of processing, phosphorylated. Post-translationally, cleaved by host furin.

It localises to the secreted. Its subcellular location is the host nucleus. May regulate immune response to the intracellular capsid in acting as a T-cell tolerogen, by having an immunoregulatory effect which prevents destruction of infected cells by cytotoxic T-cells. This immune regulation may predispose to chronicity during perinatal infections and prevent severe liver injury during adult infections. This is External core antigen from Hepatitis B virus genotype D (isolate Germany/1-91/1991) (HBV-D).